A 342-amino-acid chain; its full sequence is Probable receptor-like protein kinase At4g10390 (342 aa).

In terms of domain architecture, Protein kinase spans 41–336; the sequence is SNFSRLIGSG…IKEIPSLSFL (296 aa). ATP-binding positions include 47-55 and Lys-69; that span reads IGSGGYSSI. The active-site Proton acceptor is the Asp-165. Ser-169 and Ser-201 each carry phosphoserine. Tyr-220 carries the post-translational modification Phosphotyrosine.

This sequence belongs to the protein kinase superfamily. Ser/Thr protein kinase family.

It catalyses the reaction L-seryl-[protein] + ATP = O-phospho-L-seryl-[protein] + ADP + H(+). The enzyme catalyses L-threonyl-[protein] + ATP = O-phospho-L-threonyl-[protein] + ADP + H(+). This is Probable receptor-like protein kinase At4g10390 from Arabidopsis thaliana (Mouse-ear cress).